Here is a 92-residue protein sequence, read N- to C-terminus: Small ribosomal subunit protein uS17 (92 aa).

This sequence belongs to the universal ribosomal protein uS17 family. In terms of assembly, part of the 30S ribosomal subunit.

Its function is as follows. One of the primary rRNA binding proteins, it binds specifically to the 5'-end of 16S ribosomal RNA. This chain is Small ribosomal subunit protein uS17, found in Corynebacterium urealyticum (strain ATCC 43042 / DSM 7109).